The following is a 410-amino-acid chain: MNTEFIFADRQLSLIRYPEKHQHVSLQAWDSADELVIEHLESLLSENELSIGDNESTPSLMIFNDDFGALGCWFSHLAPYWVSDSYISLRSLHENLKANSLIRASEGSCTQELKTSPVKTLTSVESASFKPACAPAVVVIKVPRALALLEQQLIDLQAYITPETQVIATGKVKAITKSALNLFEKYIGPTTTSLAKKKSRLIFATPRDSLKQATSPYPTRWQCKSTMGAALIIDNLANTFARQSLDIGARIMLEHMTVSANDVVVDLGCGNGVLGVNALSLAPDAKVIFVDESYMALESARLNVLNNFPDKIEQCEFVASNCLETLLNRENKPAVTKILCNPPFHQQNAITDHIAWQMFTDSRDLLVKSGHLVVVGNRHLEYHIKLKKLFGGAKVLASDKKFVILGTAKR.

The protein belongs to the methyltransferase superfamily. RlmG family.

It localises to the cytoplasm. It catalyses the reaction guanosine(1835) in 23S rRNA + S-adenosyl-L-methionine = N(2)-methylguanosine(1835) in 23S rRNA + S-adenosyl-L-homocysteine + H(+). In terms of biological role, specifically methylates the guanine in position 1835 (m2G1835) of 23S rRNA. The polypeptide is Ribosomal RNA large subunit methyltransferase G (Alteromonas mediterranea (strain DSM 17117 / CIP 110805 / LMG 28347 / Deep ecotype)).